The following is a 292-amino-acid chain: Ribosomal protein L11 methyltransferase (292 aa).

S-adenosyl-L-methionine-binding residues include T136, G159, D181, and N228.

This sequence belongs to the methyltransferase superfamily. PrmA family.

It is found in the cytoplasm. It catalyses the reaction L-lysyl-[protein] + 3 S-adenosyl-L-methionine = N(6),N(6),N(6)-trimethyl-L-lysyl-[protein] + 3 S-adenosyl-L-homocysteine + 3 H(+). Its function is as follows. Methylates ribosomal protein L11. The protein is Ribosomal protein L11 methyltransferase of Rhizobium etli (strain ATCC 51251 / DSM 11541 / JCM 21823 / NBRC 15573 / CFN 42).